A 157-amino-acid chain; its full sequence is Transcription elongation factor GreA (157 aa).

Residues 47–75 (SGEYEDAKKAQALLEGRIRELKHLLSRAE) are a coiled coil.

The protein belongs to the GreA/GreB family.

Necessary for efficient RNA polymerase transcription elongation past template-encoded arresting sites. The arresting sites in DNA have the property of trapping a certain fraction of elongating RNA polymerases that pass through, resulting in locked ternary complexes. Cleavage of the nascent transcript by cleavage factors such as GreA or GreB allows the resumption of elongation from the new 3'terminus. GreA releases sequences of 2 to 3 nucleotides. This is Transcription elongation factor GreA from Chloroflexus aggregans (strain MD-66 / DSM 9485).